Here is an 854-residue protein sequence, read N- to C-terminus: Fibronectin-binding protein PlpA (854 aa).

Positions 1–24 (MDNNQNNFNQPGQQGFDQYQQQSG) are enriched in low complexity. A disordered region spans residues 1–33 (MDNNQNNFNQPGQQGFDQYQQQSGALVSYGYDA). A fibronectin-binding region spans residues 91-109 (QYNQQQNQGYEQQYDEYGN). Disordered regions lie at residues 247–327 (YEQE…LEAP), 411–434 (SSNN…EDSN), 743–766 (TINP…QLPP), and 835–854 (IQPS…YNNR). Residues 258-267 (EPAHEQDLRE) show a composition bias toward basic and acidic residues. Composition is skewed to polar residues over residues 311-320 (TVNQPDQTPI) and 411-428 (SSNN…TSNE). Positions 384 to 622 (NLEEIQKVKL…SSFQKALSEV (239 aa)) form a coiled coil. Over residues 746 to 764 (PPQPQPQALPQPHPQPQQL) the composition is skewed to pro residues.

It is found in the cell membrane. In terms of biological role, binds immobilized fibronectin, specifically the gelatin/heparin-binding domain. The polypeptide is Fibronectin-binding protein PlpA (plpA) (Mycoplasmoides gallisepticum (strain R(low / passage 15 / clone 2)) (Mycoplasma gallisepticum)).